The chain runs to 257 residues: Acetylglutamate kinase (257 aa).

Residues 43–44, R65, and N157 contribute to the substrate site; that span reads GG. ATP is bound by residues 180-185 and 208-210; these read DVSGIL and IIT.

It belongs to the acetylglutamate kinase family. ArgB subfamily. As to quaternary structure, homodimer.

Its subcellular location is the cytoplasm. The enzyme catalyses N-acetyl-L-glutamate + ATP = N-acetyl-L-glutamyl 5-phosphate + ADP. The protein operates within amino-acid biosynthesis; L-arginine biosynthesis; N(2)-acetyl-L-ornithine from L-glutamate: step 2/4. Catalyzes the ATP-dependent phosphorylation of N-acetyl-L-glutamate. This chain is Acetylglutamate kinase, found in Photorhabdus laumondii subsp. laumondii (strain DSM 15139 / CIP 105565 / TT01) (Photorhabdus luminescens subsp. laumondii).